The following is a 200-amino-acid chain: dITP/XTP pyrophosphatase (200 aa).

Thr7–Lys12 serves as a coordination point for substrate. 2 residues coordinate Mg(2+): Glu38 and Asp73. The active-site Proton acceptor is Asp73. Residues Ser74, Phe154 to Asp157, Lys177, and His182 to Arg183 each bind substrate.

This sequence belongs to the HAM1 NTPase family. As to quaternary structure, homodimer. The cofactor is Mg(2+).

The catalysed reaction is XTP + H2O = XMP + diphosphate + H(+). The enzyme catalyses dITP + H2O = dIMP + diphosphate + H(+). It carries out the reaction ITP + H2O = IMP + diphosphate + H(+). Functionally, pyrophosphatase that catalyzes the hydrolysis of nucleoside triphosphates to their monophosphate derivatives, with a high preference for the non-canonical purine nucleotides XTP (xanthosine triphosphate), dITP (deoxyinosine triphosphate) and ITP. Seems to function as a house-cleaning enzyme that removes non-canonical purine nucleotides from the nucleotide pool, thus preventing their incorporation into DNA/RNA and avoiding chromosomal lesions. This chain is dITP/XTP pyrophosphatase, found in Campylobacter jejuni subsp. jejuni serotype O:2 (strain ATCC 700819 / NCTC 11168).